Here is a 197-residue protein sequence, read N- to C-terminus: Dephospho-CoA kinase (197 aa).

The DPCK domain occupies 2 to 197 (IIGLTGGIAS…GAIKDLANLV (196 aa)). 10 to 15 (ASGKST) lines the ATP pocket.

This sequence belongs to the CoaE family.

It localises to the cytoplasm. The catalysed reaction is 3'-dephospho-CoA + ATP = ADP + CoA + H(+). It functions in the pathway cofactor biosynthesis; coenzyme A biosynthesis; CoA from (R)-pantothenate: step 5/5. In terms of biological role, catalyzes the phosphorylation of the 3'-hydroxyl group of dephosphocoenzyme A to form coenzyme A. The protein is Dephospho-CoA kinase of Streptococcus thermophilus (strain CNRZ 1066).